Here is a 493-residue protein sequence, read N- to C-terminus: Cytochrome P450 2E1 (493 aa).

298 to 303 (FAGTET) lines the substrate pocket. Residue cysteine 437 participates in heme binding.

Belongs to the cytochrome P450 family. In terms of assembly, interacts with chaperones HSP70 and HSP90; this interaction is required for initial targeting to mitochondria. The cofactor is heme. Highest level in the liver and to a lesser extent in the kidney, with a higher level in the male kidney than in the female.

It is found in the endoplasmic reticulum membrane. Its subcellular location is the microsome membrane. The protein resides in the mitochondrion inner membrane. It catalyses the reaction an organic molecule + reduced [NADPH--hemoprotein reductase] + O2 = an alcohol + oxidized [NADPH--hemoprotein reductase] + H2O + H(+). The catalysed reaction is (5Z,8Z,11Z)-eicosatrienoate + reduced [NADPH--hemoprotein reductase] + O2 = 19-hydroxy-(5Z,8Z,11Z)-eicosatrienoate + oxidized [NADPH--hemoprotein reductase] + H2O + H(+). It carries out the reaction (5Z,8Z,11Z,14Z,17Z)-eicosapentaenoate + reduced [NADPH--hemoprotein reductase] + O2 = 19-hydroxy-(5Z,8Z,11Z,14Z,17Z)-eicosapentaenoate + oxidized [NADPH--hemoprotein reductase] + H2O + H(+). The enzyme catalyses (4Z,7Z,10Z,13Z,16Z,19Z)-docosahexaenoate + reduced [NADPH--hemoprotein reductase] + O2 = 21-hydroxy-(4Z,7Z,10Z,13Z,16Z,19Z)-docosahexaenoate + oxidized [NADPH--hemoprotein reductase] + H2O + H(+). It catalyses the reaction dodecanoate + reduced [NADPH--hemoprotein reductase] + O2 = 11-hydroxydodecanoate + oxidized [NADPH--hemoprotein reductase] + H2O + H(+). The catalysed reaction is tetradecanoate + reduced [NADPH--hemoprotein reductase] + O2 = 13-hydroxytetradecanoate + oxidized [NADPH--hemoprotein reductase] + H2O + H(+). It carries out the reaction 4-nitrophenol + NADPH + O2 + H(+) = 4-nitrocatechol + NADP(+) + H2O. Its pathway is lipid metabolism; fatty acid metabolism. With respect to regulation, the omega-1 hydroxylase activity is stimulated by cytochrome b5. Its function is as follows. A cytochrome P450 monooxygenase involved in the metabolism of fatty acids. Mechanistically, uses molecular oxygen inserting one oxygen atom into a substrate, and reducing the second into a water molecule, with two electrons provided by NADPH via cytochrome P450 reductase (NADPH--hemoprotein reductase). Catalyzes the hydroxylation of carbon-hydrogen bonds. Hydroxylates fatty acids specifically at the omega-1 position displaying the highest catalytic activity for saturated fatty acids. May be involved in the oxidative metabolism of xenobiotics. This chain is Cytochrome P450 2E1 (Cyp2e1), found in Mus musculus (Mouse).